A 159-amino-acid chain; its full sequence is Succinate dehydrogenase [ubiquinone] cytochrome b small subunit, mitochondrial (159 aa).

A mitochondrion-targeting transit peptide spans 1 to 56 (MAVLWRLSAVCGALGGRALLLRTPVVRPAHISAFLQDRPIPEWCGVQHIHLSPSHH). Over 57–63 (SGSKAAS) the chain is Mitochondrial matrix. The helical transmembrane segment at 64-85 (LHWTSERVVSVLLLGLLPAAYL) threads the bilayer. Topologically, residues 86–90 (NPCSA) are mitochondrial intermembrane. The helical transmembrane segment at 91–111 (MDYSLAAALTLHGHWGLGQVV) threads the bilayer. His102 provides a ligand contact to heme b. At 112 to 122 (TDYVHGDALQK) the chain is on the mitochondrial matrix side. Tyr114 lines the a ubiquinone pocket. Residues 123–144 (AAKAGLLALSALTFAGLCYFNY) traverse the membrane as a helical segment. Residues 145-159 (HDVGICKAVAMLWKL) lie on the Mitochondrial intermembrane side of the membrane.

Belongs to the CybS family. In terms of assembly, component of complex II composed of four subunits: the flavoprotein (FP) SDHA, iron-sulfur protein (IP) SDHB, and a cytochrome b560 composed of SDHC and SDHD.

It localises to the mitochondrion inner membrane. The protein operates within carbohydrate metabolism; tricarboxylic acid cycle. In terms of biological role, membrane-anchoring subunit of succinate dehydrogenase (SDH) that is involved in complex II of the mitochondrial electron transport chain and is responsible for transferring electrons from succinate to ubiquinone (coenzyme Q). SDH also oxidizes malate to the non-canonical enol form of oxaloacetate, enol-oxaloacetate. Enol-oxaloacetate, which is a potent inhibitor of the succinate dehydrogenase activity, is further isomerized into keto-oxaloacetate. The protein is Succinate dehydrogenase [ubiquinone] cytochrome b small subunit, mitochondrial (SDHD) of Homo sapiens (Human).